Here is a 129-residue protein sequence, read N- to C-terminus: Large ribosomal subunit protein bL20 (129 aa).

Belongs to the bacterial ribosomal protein bL20 family.

Its function is as follows. Binds directly to 23S ribosomal RNA and is necessary for the in vitro assembly process of the 50S ribosomal subunit. It is not involved in the protein synthesizing functions of that subunit. The sequence is that of Large ribosomal subunit protein bL20 from Rhodococcus jostii (strain RHA1).